We begin with the raw amino-acid sequence, 914 residues long: Beta-mannosidase A (914 aa).

Positions 1-20 (MRFTATAAALVASSIPATLG) are cleaved as a signal peptide. Asn-39, Asn-79, Asn-230, Asn-265, Asn-299, Asn-309, and Asn-330 each carry an N-linked (GlcNAc...) asparagine glycan. The active-site Proton donor is Glu-462. Residues Asn-591, Asn-614, Asn-641, Asn-721, Asn-744, Asn-773, Asn-784, and Asn-909 are each glycosylated (N-linked (GlcNAc...) asparagine).

It belongs to the glycosyl hydrolase 2 family. Beta-mannosidase A subfamily. In terms of assembly, homodimer.

The protein localises to the secreted. It carries out the reaction Hydrolysis of terminal, non-reducing beta-D-mannose residues in beta-D-mannosides.. It functions in the pathway glycan metabolism; N-glycan degradation. Its function is as follows. Exoglycosidase that cleaves the single beta-linked mannose residue from the non-reducing end of beta-mannosidic oligosaccharides of various complexity and length. Involved in the degradation of polymeric mannan and galactomannan. In Aspergillus flavus (strain ATCC 200026 / FGSC A1120 / IAM 13836 / NRRL 3357 / JCM 12722 / SRRC 167), this protein is Beta-mannosidase A (mndA).